The following is a 329-amino-acid chain: MKQGLISIIIPSYNEGYNVKLIHESLKKEFKNIHYDYEIFFINDGSVDDTLQQIKDLAATCSRVKYISFSRNFGKEAAILAGFEHVQGEAVIVMDADLQHPTYLLKEFIKGYEEGYDQVIAQRNRKGDSFVRSLLSSMYYKFINKAVEVDLRDGVGDFRLLSRQAVNALLKLSEGNRFSKGLFCWIGFDQKIVFYENVERKNGTSKWSFSSLFNYGMDGVVSFNHKPLRLCFYTGIFILLLSIIYIIATFVKILTNGISVPGYFTIISAVLFLGGVQLLSLGIIGEYIGRIYYETKKRPHYLIKEANIPNKDLPETNELKSMRRLTKMH.

2 helical membrane-spanning segments follow: residues 231–251 and 264–284; these read CFYTGIFILLLSIIYIIATFV and FTIISAVLFLGGVQLLSLGII.

It belongs to the glycosyltransferase 2 family. GtrB subfamily.

The protein resides in the cell membrane. The sequence is that of Putative glycosyltransferase CsbB (csbB) from Bacillus subtilis (strain 168).